The following is a 693-amino-acid chain: Polyribonucleotide nucleotidyltransferase (693 aa).

Positions 489 and 495 each coordinate Mg(2+). Residues 556–615 (PQIHVMNINPAKIKDVVGRGGATVKGIVEKTGAQIDTSDSGEVKVFAKDKKSMDMAVAMI) form the KH domain. One can recognise an S1 motif domain in the interval 625–693 (GQVYKGKIVK…GRVKLSLVAR (69 aa)).

This sequence belongs to the polyribonucleotide nucleotidyltransferase family. As to quaternary structure, component of the RNA degradosome, which is a multiprotein complex involved in RNA processing and mRNA degradation. It depends on Mg(2+) as a cofactor.

The protein localises to the cytoplasm. The enzyme catalyses RNA(n+1) + phosphate = RNA(n) + a ribonucleoside 5'-diphosphate. Its function is as follows. Involved in mRNA degradation. Catalyzes the phosphorolysis of single-stranded polyribonucleotides processively in the 3'- to 5'-direction. This chain is Polyribonucleotide nucleotidyltransferase, found in Francisella tularensis subsp. tularensis (strain FSC 198).